A 920-amino-acid polypeptide reads, in one-letter code: Periplasmic nitrate reductase (920 aa).

Residues 1–29 (MNRRDFIKSTAAAAACASAGIALPANLNA) constitute a signal peptide (tat-type signal). The 57-residue stretch at 35-91 (WRWDKAVCRFCGTGCGIMVATKNGKIVAVKGDPEAPVNRGLNCIKGYFNAKIMYGDD) folds into the 4Fe-4S Mo/W bis-MGD-type domain. [4Fe-4S] cluster-binding residues include C42, C45, C49, and C77. Mo-bis(molybdopterin guanine dinucleotide) contacts are provided by residues K79, Q147, N172, C176, 209–216 (WGANMAEM), M416, Q420, N526, 551–552 (SD), K574, D601, and 810–819 (TGRVLEHWHS). W886 contributes to the substrate binding site. Positions 894 and 911 each coordinate Mo-bis(molybdopterin guanine dinucleotide).

The protein belongs to the prokaryotic molybdopterin-containing oxidoreductase family. NasA/NapA/NarB subfamily. Component of the periplasmic nitrate reductase NapAB complex composed of NapA and NapB. The cofactor is [4Fe-4S] cluster. Mo-bis(molybdopterin guanine dinucleotide) serves as cofactor. Predicted to be exported by the Tat system. The position of the signal peptide cleavage has not been experimentally proven.

It is found in the periplasm. It carries out the reaction 2 Fe(II)-[cytochrome] + nitrate + 2 H(+) = 2 Fe(III)-[cytochrome] + nitrite + H2O. Its function is as follows. Catalytic subunit of the periplasmic nitrate reductase complex NapAB. Receives electrons from NapB and catalyzes the reduction of nitrate to nitrite. This is Periplasmic nitrate reductase from Campylobacter hominis (strain ATCC BAA-381 / DSM 21671 / CCUG 45161 / LMG 19568 / NCTC 13146 / CH001A).